A 223-amino-acid polypeptide reads, in one-letter code: Putative lipoprotein NMB1126/NMB1164 (223 aa).

The signal sequence occupies residues 1–19 (MKTVSTAVVLAAAAVSLTG). Cysteine 20 carries the N-palmitoyl cysteine lipid modification. The S-diacylglycerol cysteine moiety is linked to residue cysteine 20.

It is found in the cell membrane. The chain is Putative lipoprotein NMB1126/NMB1164 from Neisseria meningitidis serogroup B (strain ATCC BAA-335 / MC58).